Consider the following 462-residue polypeptide: Elongation factor 1-alpha (462 aa).

Blocked amino end (Gly) is present on Gly2. Positions 5–242 (KIHINIVVIG…DAILPPSRPT (238 aa)) constitute a tr-type G domain. Residues 14-21 (GHVDSGKS) form a G1 region. Residue 14–21 (GHVDSGKS) participates in GTP binding. Position 36 is an N6,N6,N6-trimethyllysine (Lys36). At Lys55 the chain carries N6-methyllysine. Positions 70 to 74 (GITID) are G2. Lys79 is subject to N6,N6,N6-trimethyllysine. The segment at 91 to 94 (DAPG) is G3. GTP-binding positions include 91–95 (DAPGH) and 153–156 (NKMD). A G4 region spans residues 153–156 (NKMD). A G5 region spans residues 194-196 (SGW). Residues Lys219 and Lys318 each carry the N6,N6,N6-trimethyllysine modification. Glu374 carries the post-translational modification 5-glutamyl glycerylphosphorylethanolamine.

It belongs to the TRAFAC class translation factor GTPase superfamily. Classic translation factor GTPase family. EF-Tu/EF-1A subfamily. In terms of processing, the N-terminus is blocked.

The protein localises to the cytoplasm. Its function is as follows. This protein promotes the GTP-dependent binding of aminoacyl-tRNA to the A-site of ribosomes during protein biosynthesis. This is Elongation factor 1-alpha from Artemia salina (Brine shrimp).